The primary structure comprises 1132 residues: Myosin-binding protein C, fast-type (1132 aa).

Residues 1-59 are disordered; sequence MPEPSKAAPKKEAKKKEEKKEEKKEAPPPQEHKDEAPDDVHPPETPDPEGLFLSKPQNV. Residues 9–44 are compositionally biased toward basic and acidic residues; that stretch reads PKKEAKKKEEKKEEKKEAPPPQEHKDEAPDDVHPPE. 5 Ig-like C2-type domains span residues 48-149, 249-338, 339-429, 430-530, and 531-630; these read PEGL…SIDV, SEAF…VKEP, PVTV…VEEK, QLEV…KQEP, and PKIH…VVDV. Fibronectin type-III domains are found at residues 633–729 and 731–826; these read PPQS…IAPT and EPTH…IREI. Residues 830–923 enclose the Ig-like C2-type 6 domain; it reads PKIRLPRHLR…ATLRLRVVER (94 aa). Residues 926-1022 enclose the Fibronectin type-III 3 domain; the sequence is PPQAVRVMEV…HNTARIAKEG (97 aa). The Ig-like C2-type 7 domain occupies 1039–1132; that stretch reads PQFLTPLVDR…ECRLDVRVPQ (94 aa).

The protein belongs to the immunoglobulin superfamily. MyBP family.

Its function is as follows. Thick filament-associated protein located in the crossbridge region of vertebrate striated muscle a bands. In vitro it binds MHC, F-actin and native thin filaments, and modifies the activity of actin-activated myosin ATPase. It may modulate muscle contraction or may play a more structural role. In Gallus gallus (Chicken), this protein is Myosin-binding protein C, fast-type (MYBPC2).